Consider the following 89-residue polypeptide: CRISPR-associated endoribonuclease Cas2 2 (89 aa).

Asp-9 is a Mg(2+) binding site.

Belongs to the CRISPR-associated endoribonuclease Cas2 protein family. As to quaternary structure, homodimer, forms a heterotetramer with a Cas1 homodimer. The cofactor is Mg(2+).

Functionally, CRISPR (clustered regularly interspaced short palindromic repeat), is an adaptive immune system that provides protection against mobile genetic elements (viruses, transposable elements and conjugative plasmids). CRISPR clusters contain sequences complementary to antecedent mobile elements and target invading nucleic acids. CRISPR clusters are transcribed and processed into CRISPR RNA (crRNA). Functions as a ssRNA-specific endoribonuclease. Involved in the integration of spacer DNA into the CRISPR cassette. The protein is CRISPR-associated endoribonuclease Cas2 2 of Methanospirillum hungatei JF-1 (strain ATCC 27890 / DSM 864 / NBRC 100397 / JF-1).